The chain runs to 244 residues: 2,3-bisphosphoglycerate-dependent phosphoglycerate mutase (244 aa).

Residues 8–15 (RHGESNWN), 21–22 (TG), Arg-60, 87–90 (ERHY), Lys-98, 114–115 (RR), and 181–182 (GN) each bind substrate. His-9 acts as the Tele-phosphohistidine intermediate in catalysis. The active-site Proton donor/acceptor is Glu-87.

The protein belongs to the phosphoglycerate mutase family. BPG-dependent PGAM subfamily.

The enzyme catalyses (2R)-2-phosphoglycerate = (2R)-3-phosphoglycerate. Its pathway is carbohydrate degradation; glycolysis; pyruvate from D-glyceraldehyde 3-phosphate: step 3/5. Functionally, catalyzes the interconversion of 2-phosphoglycerate and 3-phosphoglycerate. This Frankia alni (strain DSM 45986 / CECT 9034 / ACN14a) protein is 2,3-bisphosphoglycerate-dependent phosphoglycerate mutase.